The primary structure comprises 215 residues: Pyridoxine/pyridoxamine 5'-phosphate oxidase (215 aa).

Substrate contacts are provided by residues 9-12 and Lys-69; that span reads RRDY. FMN contacts are provided by residues 64–69, 79–80, Lys-86, and Gln-108; these read RILLLK and FT. The substrate site is built by Tyr-126, Arg-130, and Ser-134. FMN-binding positions include 143–144 and Trp-188; that span reads QS. 194–196 provides a ligand contact to substrate; it reads RLH. Arg-198 provides a ligand contact to FMN.

It belongs to the pyridoxamine 5'-phosphate oxidase family. In terms of assembly, homodimer. FMN is required as a cofactor.

The catalysed reaction is pyridoxamine 5'-phosphate + O2 + H2O = pyridoxal 5'-phosphate + H2O2 + NH4(+). It catalyses the reaction pyridoxine 5'-phosphate + O2 = pyridoxal 5'-phosphate + H2O2. It participates in cofactor metabolism; pyridoxal 5'-phosphate salvage; pyridoxal 5'-phosphate from pyridoxamine 5'-phosphate: step 1/1. Its pathway is cofactor metabolism; pyridoxal 5'-phosphate salvage; pyridoxal 5'-phosphate from pyridoxine 5'-phosphate: step 1/1. Functionally, catalyzes the oxidation of either pyridoxine 5'-phosphate (PNP) or pyridoxamine 5'-phosphate (PMP) into pyridoxal 5'-phosphate (PLP). This Pseudomonas fluorescens (strain SBW25) protein is Pyridoxine/pyridoxamine 5'-phosphate oxidase.